Consider the following 178-residue polypeptide: Probable major fimbrial subunit LpfA (178 aa).

Positions 1–24 (MEFFMKKVVFALTALALTSGTVFA) are cleaved as a signal peptide.

This sequence belongs to the fimbrial protein family.

The protein localises to the fimbrium. Part of the lpfABCC'DE fimbrial operon. LP fimbriae may participate in the interaction with eukaryotic cells by assisting in microcolony formation. This Escherichia coli O157:H7 protein is Probable major fimbrial subunit LpfA (lpfA).